The sequence spans 95 residues: Membrane protein insertion and folding monitor (95 aa).

Residues 12–32 (LFLVDFFTIILPALTAIGIAF) traverse the membrane as a helical segment. A crucial for elongation arrest region spans residues 86 to 89 (DEED).

It localises to the cell membrane. Its function is as follows. Sensor protein that up-regulates translation of the secondary membrane protein insertase (MisCB/YqjG) when activity of the primary membrane protein insertase (MisCA/SpoIIIJ) is limited. Acts as a ribosome-nascent chain complex. When the primary membrane protein insertase activity or level is reduced, the membrane insertion of MifM is impaired, which induces arrest of MifM translation and unfolding of the mRNA hairpin. Unfolding leads to translation of the downstream gene, which encodes the secondary membrane protein insertase MisCB/YqjG. Translation arrest of MifM is mediated by interaction of its C-terminal domain with the ribosomal polypeptide exit tunnel. Undergoes multisite stalling, which may allow a sufficient duration of ribosomal stalling and consequently sufficient levels of MisCB/YqjG. The sequence is that of Membrane protein insertion and folding monitor (mifM) from Bacillus subtilis (strain 168).